The following is a 70-amino-acid chain: MRAIISLLLISAMVFSMIAAVPEEEGLQLSEDERGGCLPHNRFCNALSGPRCCSGLRCKELSIWDSTCLG.

The first 20 residues, 1-20 (MRAIISLLLISAMVFSMIAA), serve as a signal peptide directing secretion. Residues 21 to 34 (VPEEEGLQLSEDER) constitute a propeptide that is removed on maturation. Disulfide bonds link Cys37–Cys53, Cys44–Cys58, and Cys52–Cys68. Position 69 is a leucine amide (Leu69).

The protein belongs to the neurotoxin 01 (U2-agtx) family. As to expression, expressed by the venom gland.

The protein localises to the secreted. Its function is as follows. Insect active toxin causing rapid but reversible paralysis in crickets. No activity shown in mammals. Does not show effect on mammalian voltage-gated calcium channels. This is U2-agatoxin-Ao1j from Agelena orientalis (Funnel-web spider).